Here is a 429-residue protein sequence, read N- to C-terminus: MSILIENVMIVTMDEEQDVIKEGYILIKEDKIKEVNLGAYLGNKENLYIINGEGRCAIPGLVNAHTHAGMTIFRGYGEGLPLMRWLNEKIWPIESKLKGEHVKIATELAALEMLRSGTTCFNDMYFYEEQVVKVAKEFNIRGIIGVSIMGDSWEHQLKEAIDIDKKIKEDKSGLLDSMIAPHSPYTLSKEALESIGKEAKLQNKNIHIHISETQDEVNIIKEKYNKTPCEFLQSVGIFNSKVAAAHCVYLTDEDMNILKQNGTSVIYNPQSNMKLASGIAKIAEMIDMDINVCLGTDGTSSNNNLNMIEEMETGTILQKLYYKDATKLSAKKALEMATYNGAKALINNKKLGKIKKDYLADIALLDLNKPNMLPVNDIHSNIVFSANGSEIDYVIVNGSVVMEKGEFKHIDEEKVLYNFKEMCKDIFNN.

Histidine 65 and histidine 67 together coordinate Zn(2+). Substrate is bound by residues glutamate 94 and histidine 182. A Zn(2+)-binding site is contributed by histidine 209. Substrate-binding residues include glutamate 212 and aspartate 297. Aspartate 297 contributes to the Zn(2+) binding site.

Belongs to the metallo-dependent hydrolases superfamily. MTA/SAH deaminase family. Zn(2+) serves as cofactor.

The enzyme catalyses S-adenosyl-L-homocysteine + H2O + H(+) = S-inosyl-L-homocysteine + NH4(+). It catalyses the reaction S-methyl-5'-thioadenosine + H2O + H(+) = S-methyl-5'-thioinosine + NH4(+). Its function is as follows. Catalyzes the deamination of 5-methylthioadenosine and S-adenosyl-L-homocysteine into 5-methylthioinosine and S-inosyl-L-homocysteine, respectively. Is also able to deaminate adenosine. This chain is 5-methylthioadenosine/S-adenosylhomocysteine deaminase, found in Clostridium tetani (strain Massachusetts / E88).